We begin with the raw amino-acid sequence, 365 residues long: Protein-glutamate methylesterase/protein-glutamine glutaminase 2 (365 aa).

The Response regulatory domain maps to 6–123 (RVLIIDDSAS…ADSLSDDAMR (118 aa)). A 4-aspartylphosphate modification is found at D57. The region spanning 173-359 (AKTTEMVVCV…PLDQIAREVL (187 aa)) is the CheB-type methylesterase domain. Active-site residues include S185, H211, and D307.

It belongs to the CheB family. Phosphorylated by CheA. Phosphorylation of the N-terminal regulatory domain activates the methylesterase activity.

The protein resides in the cytoplasm. It carries out the reaction [protein]-L-glutamate 5-O-methyl ester + H2O = L-glutamyl-[protein] + methanol + H(+). The enzyme catalyses L-glutaminyl-[protein] + H2O = L-glutamyl-[protein] + NH4(+). Functionally, involved in chemotaxis. Part of a chemotaxis signal transduction system that modulates chemotaxis in response to various stimuli. Catalyzes the demethylation of specific methylglutamate residues introduced into the chemoreceptors (methyl-accepting chemotaxis proteins or MCP) by CheR. Also mediates the irreversible deamidation of specific glutamine residues to glutamic acid. This Rhizobium johnstonii (strain DSM 114642 / LMG 32736 / 3841) (Rhizobium leguminosarum bv. viciae) protein is Protein-glutamate methylesterase/protein-glutamine glutaminase 2.